Consider the following 200-residue polypeptide: 3-isopropylmalate dehydratase small subunit (200 aa).

It belongs to the LeuD family. LeuD type 1 subfamily. Heterodimer of LeuC and LeuD.

The enzyme catalyses (2R,3S)-3-isopropylmalate = (2S)-2-isopropylmalate. It functions in the pathway amino-acid biosynthesis; L-leucine biosynthesis; L-leucine from 3-methyl-2-oxobutanoate: step 2/4. Catalyzes the isomerization between 2-isopropylmalate and 3-isopropylmalate, via the formation of 2-isopropylmaleate. The protein is 3-isopropylmalate dehydratase small subunit of Arthrobacter sp. (strain FB24).